The primary structure comprises 438 residues: Porin AaxA (438 aa).

A signal peptide spans 1–21; the sequence is MISFRFLLLSGLCALGISSYA.

Belongs to the OprB family.

It localises to the cell outer membrane. Functionally, facilitates L-arginine uptake, as part of the AaxABC system. The arginine uptake by the bacterium in the macrophage may be a virulence factor against the host innate immune response. In Chlamydia pneumoniae (Chlamydophila pneumoniae), this protein is Porin AaxA (aaxA).